Reading from the N-terminus, the 322-residue chain is p55-v-Fos-transforming protein (322 aa).

The tract at residues 69–95 is disordered; sequence APGGRGQSIGRRGKVEQLSPEEEEKRR. A bZIP domain is found at 91–154; sequence EEKRRIRRER…EKLEFILAAH (64 aa). Positions 93–113 are basic motif; the sequence is KRRIRRERNKMAAAKCRNRRR. Positions 119 to 147 are leucine-zipper; that stretch reads LQAETDQLEEEKSALQAEIANLLKEKEKL. Residues 298 to 322 are disordered; that stretch reads AAHRKGSSSNEPSSDSLSSPTLLAL. The segment covering 304–316 has biased composition (low complexity); sequence SSSNEPSSDSLSS.

It belongs to the bZIP family. Fos subfamily.

It is found in the host nucleus. This Galliformes protein is p55-v-Fos-transforming protein (V-FOS).